The primary structure comprises 379 residues: Mating-type protein MAT-1 (379 aa).

Residues 60–117 constitute a DNA-binding region (alpha box); it reads KARKALNAFVGFRCYYITIPMFKPWPMKKLSNLIGLLWEADPNKSLWSLMAKAWSTIR.

Belongs to the MATALPHA1 family.

It is found in the nucleus. Mating type proteins are sequence specific DNA-binding proteins that act as master switches in fungal differentiation by controlling gene expression in a cell type-specific fashion. Transcriptional activator that induces the transcription of alpha-specific genes. The sequence is that of Mating-type protein MAT-1 (MAT1) from Cochliobolus carbonum (strain 26-R-13) (Maize leaf spot fungus).